An 898-amino-acid chain; its full sequence is Metalloprotease StcE (898 aa).

The signal sequence occupies residues 1 to 35; it reads MNTKMNERWRTPMKLKYLSCTILAPLAIGVFSATA. One can recognise a Peptidase M66 domain in the interval 296–551; the sequence is ELLLHTIDIG…QRFFENKAVF (256 aa). Zn(2+) is bound at residue H446. The active site involves E447. Residues H450 and H456 each coordinate Zn(2+).

Zn(2+) is required as a cofactor.

The protein localises to the secreted. Its activity is regulated as follows. Inhibited by divalent cation chelators such as BPS and EDTA. In terms of biological role, virulence factor that contributes to intimate adherence of enterohemorrhagic E.coli (EHEC) O157:H7 to host cells. Is able to cleave the secreted human mucin 7 (MUC7) and the glycoprotein 340 (DMBT1/GP340). Also cleaves human C1 inhibitor (SERPING1), a regulator of multiple inflammatory pathways, and binds and localizes it to bacterial and host cell surfaces, protecting them from complement-mediated lysis. Therefore, the current model proposes two roles for StcE during infection: it acts first as a mucinase, allowing passage of EHEC through the oral cavity by cleaving the salivary glycoproteins that are responsible for bacterial aggregation. Similarly, in the colon, StcE cleaves the glycoproteins that protect the intestinal epithelial surface, allowing EHEC to come into close contact with host cell membranes. Secondly, it acts as an anti-inflammatory agent by localizing SERPING1 to cell membranes. The protein is Metalloprotease StcE (stcE) of Escherichia coli O157:H7.